A 544-amino-acid chain; its full sequence is Lariat debranching enzyme (544 aa).

A divalent metal cation is bound by residues Cys8, His10, Asp39, and Asn84. Residues Ser124–Arg154 are lariat recognition loop. The residue at position 128 (Lys128) is an N6-acetyllysine. Positions 174, 226, and 228 each coordinate a divalent metal cation. The span at Glu395–Ser412 shows a compositional bias: acidic residues. Residues Glu395–Ala463 form a disordered region. A compositionally biased stretch (polar residues) spans Glu413–Asn425. Over residues Ile429–Ser439 the composition is skewed to acidic residues. A compositionally biased stretch (polar residues) spans Ser445–Ala463. Phosphoserine is present on residues Ser464, Ser474, Ser478, Ser479, Ser485, Ser499, and Ser514. Positions Ile476 to Ala544 are disordered. A compositionally biased stretch (basic and acidic residues) spans Arg512 to Arg522.

The protein belongs to the lariat debranching enzyme family. Fe(2+) serves as cofactor. Requires Zn(2+) as cofactor. It depends on Mn(2+) as a cofactor. In terms of tissue distribution, ubiquitously expressed, strongest expression in the spinal cord and brainstem.

The protein localises to the nucleus. Its activity is regulated as follows. Active in presence of diverse metals including Fe(2+), Zn(2+), Mn(2+). Also activated by Ca(2+). Binds two metal cations in two adjacent alpha and beta metal-binding pockets. In terms of biological role, cleaves the 2'-5' phosphodiester linkage at the branch point of excised lariat intron RNA and converts them into linear molecules that can be subsequently degraded, thereby facilitating ribonucleotide turnover. Linked to its role in pre-mRNA processing mechanism, may also participate in retrovirus replication via an RNA lariat intermediate in cDNA synthesis and have an antiviral cell-intrinsic defense function in the brainstem. This is Lariat debranching enzyme (DBR1) from Homo sapiens (Human).